A 341-amino-acid chain; its full sequence is uncharacterized protein (341 aa).

The next 3 membrane-spanning stretches (helical) occupy residues 6–26 (IIAG…TTLW), 63–83 (LLLC…WVLI), and 137–157 (AQGL…LSAV).

It is found in the cell membrane. This is an uncharacterized protein from Bacillus subtilis (strain 168).